The primary structure comprises 328 residues: Putative P2Y purinoceptor 10 (328 aa).

Topologically, residues 1–27 (MGSNSTSSAESNCNATYLPFQYSLYAT) are extracellular. Residues Asn-4 and Asn-14 are each glycosylated (N-linked (GlcNAc...) asparagine). A helical transmembrane segment spans residues 28–48 (TYIFIFIPGLLANSAALWVLC). Residues 49 to 56 (RFISKKNK) lie on the Cytoplasmic side of the membrane. The chain crosses the membrane as a helical span at residues 57 to 77 (AIIFMINLSVADLAHILSLPL). The Extracellular portion of the chain corresponds to 78-91 (RIYYYINRHWPFQR). A helical transmembrane segment spans residues 92–112 (ALCLLCFYLKYLNMYASIFFL). Cysteines 94 and 170 form a disulfide. The Cytoplasmic portion of the chain corresponds to 113–137 (TCISLQRCLFLLKPFRARNWKRRYD). The chain crosses the membrane as a helical span at residues 138–158 (VGISAVIWIVVGTACLPFPIL). Topologically, residues 159–182 (RNAGLANSTDSCFADLGYKQMDAV) are extracellular. Residues 183–203 (VLVTMVVIAELAGFVIPVITI) traverse the membrane as a helical segment. Residues 204-233 (ACCTWKTTVSLKHPPIAFQGISERKKALRM) are Cytoplasmic-facing. Residues 234–254 (VFMCAAVFVICFTPYHINFIF) traverse the membrane as a helical segment. The Extracellular segment spans residues 255 to 277 (YTMVKESIITSCPTVKSTLYFHP). Residues 278–298 (FSLCLASLCCLLDPILYYFMA) form a helical membrane-spanning segment. The Cytoplasmic segment spans residues 299–328 (SEFRDQLSRHGSSVTRSRLMSRESGSSMVN).

This sequence belongs to the G-protein coupled receptor 1 family.

It localises to the cell membrane. Its function is as follows. Putative receptor for purines coupled to G-proteins. The chain is Putative P2Y purinoceptor 10 (P2ry10) from Mus musculus (Mouse).